The sequence spans 389 residues: Methionyl-tRNA formyltransferase, mitochondrial (389 aa).

The protein belongs to the Fmt family.

The protein resides in the mitochondrion. The catalysed reaction is L-methionyl-tRNA(fMet) + (6R)-10-formyltetrahydrofolate = N-formyl-L-methionyl-tRNA(fMet) + (6S)-5,6,7,8-tetrahydrofolate + H(+). Functionally, methionyl-tRNA formyltransferase that formylates methionyl-tRNA in mitochondria and is crucial for translation initiation. This chain is Methionyl-tRNA formyltransferase, mitochondrial (MTFMT), found in Homo sapiens (Human).